A 610-amino-acid polypeptide reads, in one-letter code: MSDQIADIQLEHQQYVAPLGDWQRTHSCCELTAADVGNDVCIMGWVQYRRDHGGLIFVDLRDRKGLTQVVFSPDFAPEAHKDAHIVRSEYVLAIRGRVRPRPEGMTNPGMKTGEIEVVVSEWKLLNTSKTPPFLIEDRTEASENLRLAWRYLDLRRPRMARNFMLRHRAAQSARRYLDELDFLEIETPYLTKATPEGARDFLVPSRLNHGMFYALPQSPQIFKQLLMVSGMDRYYQIVRCFRDEDMRADRQLEFTQIDIEMSFVDEERVMSMAEGLMSRVMKDTLGVDVTVPFPRMTYDQAMGEYGVDKPDTRFDLRLKDVTDAVRGSEFKLFAKAPLVKAMRVPGGETMTRKEIDEFTEFVKIYGAQGLAWIKIREGEWQSPIAKFLSEAERAALVAALGLEVGDIVFFQAGEPGMVNAALGNLRVKLGQHLGLIPEDTYNFLWVTDFPLFEYDEEEKRYVACHHPFTSPKDGHFDLMTSDPAAARARAYDMVLNGYELGGGSIRIHSAEVQRRMFAALGLDPQEAEEKFGFLIQALEHGAPPHGGIAFGMDRLVMLLTGSPSIRDVIAFPKTQKATCLMTQAPDAVSARQLRDLGIRLRETPQEQKPE.

Glutamate 196 contributes to the L-aspartate binding site. The segment at 220-223 is aspartate; sequence QIFK. Arginine 242 is a binding site for L-aspartate. Residues 242–244 and glutamine 251 each bind ATP; that span reads RDE. Histidine 465 is a binding site for L-aspartate. Glutamate 499 contacts ATP. Arginine 506 lines the L-aspartate pocket. 551–554 is a binding site for ATP; that stretch reads GMDR.

The protein belongs to the class-II aminoacyl-tRNA synthetase family. Type 1 subfamily. Homodimer.

Its subcellular location is the cytoplasm. The enzyme catalyses tRNA(Asx) + L-aspartate + ATP = L-aspartyl-tRNA(Asx) + AMP + diphosphate. In terms of biological role, aspartyl-tRNA synthetase with relaxed tRNA specificity since it is able to aspartylate not only its cognate tRNA(Asp) but also tRNA(Asn). Reaction proceeds in two steps: L-aspartate is first activated by ATP to form Asp-AMP and then transferred to the acceptor end of tRNA(Asp/Asn). The polypeptide is Aspartate--tRNA(Asp/Asn) ligase (Nitratidesulfovibrio vulgaris (strain ATCC 29579 / DSM 644 / CCUG 34227 / NCIMB 8303 / VKM B-1760 / Hildenborough) (Desulfovibrio vulgaris)).